A 197-amino-acid chain; its full sequence is Gastrula zinc finger protein XlCGF17.1 (197 aa).

7 C2H2-type zinc fingers span residues 6–28 (ISCS…QMTH), 34–56 (YSCS…QKIH), 62–84 (FSCS…HRTH), 90–112 (FFCS…RRTH), 118–140 (FSCS…YRTH), 146–169 (FSCS…RRSH), and 175–197 (FSCS…LRTH).

This sequence belongs to the krueppel C2H2-type zinc-finger protein family.

The protein localises to the nucleus. In terms of biological role, may be involved in transcriptional regulation. In Xenopus laevis (African clawed frog), this protein is Gastrula zinc finger protein XlCGF17.1.